Consider the following 513-residue polypeptide: Fumarate reductase (513 aa).

Residue 41–55 (AIVIGGGLAGLSATN) coordinates FAD. S100 carries the phosphoserine modification. Residues H288 and R311 contribute to the active site.

This sequence belongs to the FAD-dependent oxidoreductase 2 family. FRD/SDH subfamily. Requires FAD as cofactor.

The protein resides in the cytoplasm. It localises to the mitochondrion. The protein localises to the nucleus. It catalyses the reaction succinate + NAD(+) = fumarate + NADH + H(+). Its function is as follows. Irreversibly catalyzes the reduction of fumarate to succinate. This is Fumarate reductase (osm1) from Schizosaccharomyces pombe (strain 972 / ATCC 24843) (Fission yeast).